Consider the following 730-residue polypeptide: Wall-associated receptor kinase-like 1 (730 aa).

The N-terminal stretch at 1–25 (MKTKTSIFQFIVASVLTLLINDSSA) is a signal peptide. At 26-358 (ATPPPPISNS…KPTKPPVLQG (333 aa)) the chain is on the extracellular side. 11 N-linked (GlcNAc...) asparagine glycosylation sites follow: N34, N40, N70, N77, N92, N119, N132, N211, N233, N269, and N281. Positions 282–341 (CSCEYDYFSGMSYRNCYCDYGYTGNPYLRGGCVDTDSCEGNHNCGEDAHCVNMPGPMSMC) are atypical EGF-like. Cystine bridges form between C284/C297, C319/C331, and C325/C341. A helical transmembrane segment spans residues 359-379 (ILIGLSGLVFFVGLFWLFKLI). Residues 380–730 (KKRRNINRSK…DQPMAINNKR (351 aa)) lie on the Cytoplasmic side of the membrane. One can recognise a Protein kinase domain in the interval 429–702 (FSIDRVLGQG…KEVSNELERI (274 aa)). Residues 435–443 (LGQGGQGTV) and K457 each bind ATP. Position 502 is a phosphotyrosine (Y502). D554 serves as the catalytic Proton acceptor. T588 and T593 each carry phosphothreonine. Phosphotyrosine is present on Y601. The segment at 685–730 (KGKNRPNMKEVSNELERIRSSPEDLDVRTENEDEEEDQPMAINNKR) is disordered. Positions 691-714 (NMKEVSNELERIRSSPEDLDVRTE) are enriched in basic and acidic residues.

The protein belongs to the protein kinase superfamily. Ser/Thr protein kinase family. In terms of tissue distribution, preferentially expressed in roots and flowers.

It is found in the membrane. The enzyme catalyses L-seryl-[protein] + ATP = O-phospho-L-seryl-[protein] + ADP + H(+). It carries out the reaction L-threonyl-[protein] + ATP = O-phospho-L-threonyl-[protein] + ADP + H(+). In terms of biological role, serine/threonine-protein kinase that may function as a signaling receptor of extracellular matrix component. This Arabidopsis thaliana (Mouse-ear cress) protein is Wall-associated receptor kinase-like 1 (WAKL1).